We begin with the raw amino-acid sequence, 400 residues long: Na(+)/H(+) antiporter NhaA (400 aa).

The next 12 membrane-spanning stretches (helical) occupy residues 26 to 46 (AGGI…NSPL), 71 to 91 (LIHW…GMEV), 107 to 127 (IFPA…YWFI), 137 to 157 (GWAI…ALLS), 166 to 186 (IFLL…IALF), 189 to 209 (HGLS…LILL), 212 to 232 (FKVS…ASVL), 233 to 253 (KSGV…PLKG), 273 to 293 (FVIL…GIDV), 299 to 319 (PLLL…IFGF), 340 to 360 (IFAV…LASL), and 373 to 393 (LSRL…YLFL).

The protein belongs to the NhaA Na(+)/H(+) (TC 2.A.33) antiporter family.

It is found in the cell inner membrane. The enzyme catalyses Na(+)(in) + 2 H(+)(out) = Na(+)(out) + 2 H(+)(in). Its function is as follows. Na(+)/H(+) antiporter that extrudes sodium in exchange for external protons. The polypeptide is Na(+)/H(+) antiporter NhaA (Haemophilus influenzae (strain PittGG)).